Reading from the N-terminus, the 1152-residue chain is Autotransporter adhesin BpaC (1152 aa).

The first 71 residues, 1-71, serve as a signal peptide directing secretion; it reads MNRIFKSIWC…PFAEEAMAAN (71 aa). Residues 72-1061 are surface exposed passenger domain; the sequence is NAGVCLTYNG…VGQLNSAVSG (990 aa). 2 disordered regions span residues 420-886 and 900-949; these read GLQG…AGAT and TATG…ESAA. Positions 427 to 442 are enriched in polar residues; that stretch reads ANTGTASGDNSTASGD. Residues 443-504 show a composition bias toward low complexity; it reads NATASGTNST…ANGTNSTASG (62 aa). Residues 505 to 519 show a composition bias toward polar residues; it reads DNSTASGTNASATGE. Residues 520–588 are compositionally biased toward low complexity; it reads NSTATGTDST…ANGTNSTASG (69 aa). Residues 589–603 are compositionally biased toward polar residues; that stretch reads DNSTASGTNASATGE. The span at 604–630 shows a compositional bias: low complexity; that stretch reads NSTATGTDSTASGSNSTANGTNSTASG. Polar residues predominate over residues 631 to 645; it reads DNSTASGTNASATGE. The span at 646 to 672 shows a compositional bias: low complexity; that stretch reads NSTATGTDSTASGSNSTANGTNSTASG. The span at 673–687 shows a compositional bias: polar residues; that stretch reads DNSTASGTNASATGE. Residues 688–714 show a composition bias toward low complexity; that stretch reads NSTATGTDSTASGSNSTANGTNSTASG. Positions 715–729 are enriched in polar residues; the sequence is DNSTASGTNASATGE. A compositionally biased stretch (low complexity) spans 730 to 756; the sequence is NSTATGTDSTASGSNSTANGANSTASG. Polar residues predominate over residues 757-771; sequence DNSTASGTNASATGE. Composition is skewed to low complexity over residues 772 to 840 and 848 to 886; these read NSTA…TASG and TNAS…AGAT. The segment at 1062 to 1099 is outer membrane translocation of the passenger domain; sequence IRNQMDGMQGQIDTLARDAYSGIAAATALTMIPDVDPG. A translocator domain region spans residues 1100–1152; it reads KTLAVGIGTANFKGYQASALGATARITQNLKVKTGVSYSGSNYVWGAGMSYQW.

Belongs to the autotransporter-2 (AT-2) (TC 1.B.40) family. Homotrimer.

It is found in the cell surface. The protein localises to the cell outer membrane. Involved in virulence. Mediates adherence to human respiratory epithelial cells. This is Autotransporter adhesin BpaC from Burkholderia pseudomallei (strain 1026b).